The following is a 309-amino-acid chain: L-arabinose 1-dehydrogenase (NAD(P)(+)) (309 aa).

NADP(+) contacts are provided by residues Ile-15 and Ser-37–Arg-38. The active-site Proton donor is the Lys-91. Asp-169 serves as a coordination point for NADP(+).

It belongs to the Gfo/Idh/MocA family. In terms of assembly, monomer.

The enzyme catalyses alpha-L-arabinopyanose + NAD(+) = L-arabinono-1,4-lactone + NADH + H(+). It carries out the reaction alpha-L-arabinopyanose + NADP(+) = L-arabinono-1,4-lactone + NADPH + H(+). It catalyses the reaction D-galactose + NAD(+) = D-galactono-1,4-lactone + NADH + H(+). The catalysed reaction is D-galactose + NADP(+) = D-galactono-1,5-lactone + NADPH + H(+). Its pathway is carbohydrate degradation; L-arabinose degradation via L-arabinono-1,4-lactone pathway. Its function is as follows. Catalyzes the NAD(P)(+)-dependent conversion of L-arabinose to L-arabino-gamma-lactone. Is involved in a degradation pathway of L-arabinose that allows A.brasilense to grow on L-arabinose as a sole carbon source. Prefers NADP(+) to NAD(+) as electron acceptor. Displays high catalytic efficiency for both L-arabinose and D-galactose in vitro. However, the enzyme appears to be involved in the metabolism of L-arabinose but not D-galactose in vivo. To a lesser extent, is also active on D-talose and D-xylose as substrates in vitro, but not with D-arabinose, D-glucose, D-ribose, L-xylose, L-mannose, L-lyxose, and D-fructose. This is L-arabinose 1-dehydrogenase (NAD(P)(+)) (araA) from Azospirillum brasilense.